Here is a 391-residue protein sequence, read N- to C-terminus: Protein-glutamate methylesterase/protein-glutamine glutaminase of group 2 operon (391 aa).

In terms of domain architecture, Response regulatory spans 20–138 (RVMIVDDSVV…EPQAADIFKH (119 aa)). 4-aspartylphosphate is present on aspartate 71. Positions 196-383 (PTAPRVLLIG…PLNQIGPKVV (188 aa)) constitute a CheB-type methylesterase domain. Residues serine 207, histidine 235, and aspartate 331 contribute to the active site.

It belongs to the CheB family. In terms of processing, phosphorylated by CheA. Phosphorylation of the N-terminal regulatory domain activates the methylesterase activity.

It is found in the cytoplasm. It catalyses the reaction [protein]-L-glutamate 5-O-methyl ester + H2O = L-glutamyl-[protein] + methanol + H(+). The catalysed reaction is L-glutaminyl-[protein] + H2O = L-glutamyl-[protein] + NH4(+). Its function is as follows. Involved in chemotaxis. Part of a chemotaxis signal transduction system that modulates chemotaxis in response to various stimuli. Catalyzes the demethylation of specific methylglutamate residues introduced into the chemoreceptors (methyl-accepting chemotaxis proteins or MCP) by CheR. Also mediates the irreversible deamidation of specific glutamine residues to glutamic acid. This Rhodopseudomonas palustris (strain ATCC BAA-98 / CGA009) protein is Protein-glutamate methylesterase/protein-glutamine glutaminase of group 2 operon.